A 393-amino-acid chain; its full sequence is Methylthioribose kinase (393 aa).

Residues Asn38, Lys53, and 107–109 (EDL) each bind ATP. Asp225 provides a ligand contact to substrate. 242-244 (DPE) provides a ligand contact to ATP. Arg332 serves as a coordination point for substrate.

It belongs to the methylthioribose kinase family. Homodimer.

The catalysed reaction is 5-(methylsulfanyl)-D-ribose + ATP = 5-(methylsulfanyl)-alpha-D-ribose 1-phosphate + ADP + H(+). Its pathway is amino-acid biosynthesis; L-methionine biosynthesis via salvage pathway; S-methyl-5-thio-alpha-D-ribose 1-phosphate from S-methyl-5'-thioadenosine (hydrolase route): step 2/2. In terms of biological role, catalyzes the phosphorylation of methylthioribose into methylthioribose-1-phosphate. This chain is Methylthioribose kinase, found in Bacillus cereus (strain ATCC 14579 / DSM 31 / CCUG 7414 / JCM 2152 / NBRC 15305 / NCIMB 9373 / NCTC 2599 / NRRL B-3711).